Consider the following 95-residue polypeptide: Aspartyl/glutamyl-tRNA(Asn/Gln) amidotransferase subunit C (95 aa).

The protein belongs to the GatC family. Heterotrimer of A, B and C subunits.

It carries out the reaction L-glutamyl-tRNA(Gln) + L-glutamine + ATP + H2O = L-glutaminyl-tRNA(Gln) + L-glutamate + ADP + phosphate + H(+). The catalysed reaction is L-aspartyl-tRNA(Asn) + L-glutamine + ATP + H2O = L-asparaginyl-tRNA(Asn) + L-glutamate + ADP + phosphate + 2 H(+). Functionally, allows the formation of correctly charged Asn-tRNA(Asn) or Gln-tRNA(Gln) through the transamidation of misacylated Asp-tRNA(Asn) or Glu-tRNA(Gln) in organisms which lack either or both of asparaginyl-tRNA or glutaminyl-tRNA synthetases. The reaction takes place in the presence of glutamine and ATP through an activated phospho-Asp-tRNA(Asn) or phospho-Glu-tRNA(Gln). The polypeptide is Aspartyl/glutamyl-tRNA(Asn/Gln) amidotransferase subunit C (Chlorobium phaeobacteroides (strain BS1)).